The following is a 138-amino-acid chain: Small ribosomal subunit protein uS11c (138 aa).

Residues 1–24 (MAKAIPRSGSRRSGRIGSRKSTRR) form a disordered region. A compositionally biased stretch (basic residues) spans 9–24 (GSRRSGRIGSRKSTRR).

Belongs to the universal ribosomal protein uS11 family. As to quaternary structure, part of the 30S ribosomal subunit.

The protein localises to the plastid. The protein resides in the chloroplast. The chain is Small ribosomal subunit protein uS11c from Panax ginseng (Korean ginseng).